The following is a 223-amino-acid chain: Glutathione S-transferase Z2 (223 aa).

The GST N-terminal domain maps to Ala10–Pro91. Residues Ser20–Ser21, Ser20–Arg25, Gln49, Gln49–Ser50, Thr62–Val63, Val63, Asp75–Ser76, Gln115, and Asn119–Ala121 each bind glutathione. The GST C-terminal domain occupies Asp96–Ser221.

This sequence belongs to the GST superfamily. Zeta family.

The protein resides in the cytoplasm. Its subcellular location is the cytosol. The catalysed reaction is RX + glutathione = an S-substituted glutathione + a halide anion + H(+). May be involved in the conjugation of reduced glutathione to a wide number of exogenous and endogenous hydrophobic electrophiles and have a detoxification role against certain herbicides. The protein is Glutathione S-transferase Z2 (GSTZ2) of Arabidopsis thaliana (Mouse-ear cress).